Reading from the N-terminus, the 343-residue chain is Flavone 3'-O-methyltransferase OMT2 (343 aa).

Asn107 is a (E)-ferulate binding site. The S-adenosyl-L-homocysteine site is built by Gly184, Asp207, Asp227, Met228, Met240, and Lys241. Catalysis depends on His245, which acts as the Proton acceptor. Asp246 provides a ligand contact to (E)-5-hydroxyferulate. Active-site residues include Glu273 and Glu305.

This sequence belongs to the class I-like SAM-binding methyltransferase superfamily. Cation-independent O-methyltransferase family. COMT subfamily. Homodimer.

It catalyses the reaction (E)-5-hydroxyferulate + S-adenosyl-L-methionine = (E)-sinapate + S-adenosyl-L-homocysteine + H(+). The catalysed reaction is luteolin + S-adenosyl-L-methionine = chrysoeriol + S-adenosyl-L-homocysteine + H(+). It carries out the reaction quercetin + S-adenosyl-L-methionine = isorhamnetin + S-adenosyl-L-homocysteine + H(+). The enzyme catalyses (E)-caffeate + S-adenosyl-L-methionine = (E)-ferulate + S-adenosyl-L-homocysteine + H(+). It catalyses the reaction a 3'-hydroxyflavone + S-adenosyl-L-methionine = a 3'-methoxyflavone + S-adenosyl-L-homocysteine + H(+). Its pathway is flavonoid metabolism. Functionally, catalyzes the 3'-O-methylation of the flavonoids luteolin and quercetin. Catalyzes the 3- of 5-O-methylation of the phenylpropanoids caffeate and 5-hydroxyferulate. Substrate preference is 5-hydroxyferulate &gt; luteolin &gt; quercetin &gt; caffeate. Apigenin, kempferol and 3,4-dimethylquercetin do not seem to be substrates for methylation. In Chrysosplenium americanum (American golden saxifrage), this protein is Flavone 3'-O-methyltransferase OMT2.